The chain runs to 719 residues: Cyclin-dependent kinase 11.1 (719 aa).

Composition is skewed to basic and acidic residues over residues 1–20 (MSDH…ESHK), 38–48 (KGLESKMRESI), and 78–129 (KAKE…DQKV). Disordered stretches follow at residues 1-215 (MSDH…KDDD) and 231-315 (EEKE…EMTE). A compositionally biased stretch (basic residues) spans 130 to 140 (HEHRHHHHHRK). Positions 141 to 163 (HETDGHRTNRSNRDRSSERDSEK) are enriched in basic and acidic residues. Positions 164-174 (HKRHIDRHKKS) are enriched in basic residues. Basic and acidic residues-rich tracts occupy residues 191-215 (HTDV…KDDD) and 264-274 (DDTKPKSPGKA). Residues 275–285 (EDDDDVIEVLD) show a composition bias toward acidic residues. The 292-residue stretch at 356 to 647 (YECVNRVDEG…ATQALDHEWF (292 aa)) folds into the Protein kinase domain. ATP-binding positions include 362-370 (VDEGTFGVV) and K385. The active-site Proton acceptor is the D484. Positions 657–689 (EEFPTFPAKSEQNKAPPPAKQKQQENRISHVDP) are disordered. The span at 678–689 (KQQENRISHVDP) shows a compositional bias: basic and acidic residues.

Belongs to the protein kinase superfamily. CMGC Ser/Thr protein kinase family. CDC2/CDKX subfamily. In terms of tissue distribution, broadly expressed in somatic and germ line cells (at protein level). Not expressed in sperm (at protein level).

The protein localises to the nucleus. The catalysed reaction is L-seryl-[protein] + ATP = O-phospho-L-seryl-[protein] + ADP + H(+). It catalyses the reaction L-threonyl-[protein] + ATP = O-phospho-L-threonyl-[protein] + ADP + H(+). In terms of biological role, probable cyclin-dependent kinase whose activity is most likely regulated by the cyclin cyl-1/Cylin-L. Important for normal oocyte and sperm development; probably required during multiple stages of gametogenesis. Plays a role in the activation of RAS-ERK signaling in the germ line. Also acts partially redundantly with cdk-11.2 to ensure embryonic viability. This chain is Cyclin-dependent kinase 11.1, found in Caenorhabditis elegans.